The sequence spans 687 residues: Protein SDA1 homolog (687 aa).

Disordered stretches follow at residues 517–549 (SSDE…SQMR), 561–587 (MKQL…EPQG), and 615–687 (TVIA…KSKI). Positions 520–537 (EEQEDEDPSGENQEGEED) are enriched in acidic residues. Residues 644–666 (EKRRKKNFMMMRHNKLVRGKTKR) are compositionally biased toward basic residues. The segment covering 667–680 (SFRDKQIALRDSLL) has biased composition (basic and acidic residues).

This sequence belongs to the SDA1 family.

It localises to the nucleus. Its subcellular location is the nucleolus. Functionally, required for 60S pre-ribosomal subunits export to the cytoplasm. In Nematostella vectensis (Starlet sea anemone), this protein is Protein SDA1 homolog (sdad1).